Reading from the N-terminus, the 233-residue chain is Large ribosomal subunit protein uL1 (233 aa).

It belongs to the universal ribosomal protein uL1 family. Part of the 50S ribosomal subunit.

Its function is as follows. Binds directly to 23S rRNA. The L1 stalk is quite mobile in the ribosome, and is involved in E site tRNA release. In terms of biological role, protein L1 is also a translational repressor protein, it controls the translation of the L11 operon by binding to its mRNA. This is Large ribosomal subunit protein uL1 from Brucella suis (strain ATCC 23445 / NCTC 10510).